A 1090-amino-acid chain; its full sequence is Leucine-rich repeat receptor-like serine/threonine-protein kinase RGI4 (1090 aa).

The N-terminal stretch at 1–20 (MPRNPRFCFFLFLLFHSSLF) is a signal peptide. The Extracellular portion of the chain corresponds to 21–702 (FSIPCFSIDE…IQTRHRSAVK (682 aa)). The LRR 1 repeat unit spans residues 36–59 (LSWKSQLNISGDALSSWKASESNP). N43 carries an N-linked (GlcNAc...) asparagine glycan. The cysteines at positions 60 and 67 are disulfide-linked. LRR repeat units lie at residues 95–119 (IKSL…LGDL), 120–143 (SELE…IFKL), 145–166 (KLKI…ELGN), and 168–191 (VNLI…IGEL). An N-linked (GlcNAc...) asparagine glycan is attached at N107. 4 short sequence motifs (small peptide recognition) span residues 176-177 (FD), 198-201 (RAGG), 221-226 (TLGLAE), and Y249. LRR repeat units follow at residues 216 to 240 (CESL…IGNL), 242 to 264 (KVQT…IGNC), 265 to 288 (TELQ…MGRL), 289 to 312 (KKLQ…LGTC), 314 to 335 (ELFL…SFGN), 336 to 360 (LPNL…LANC), and 362 to 386 (KLTH…KLTS). N-linked (GlcNAc...) asparagine glycosylation is present at N263. The CLE45 peptide binding motif lies at 269 to 273 (NLYLY). A Small peptide recognition motif is present at residues 271-273 (YLY). 2 short sequence motifs (small peptide recognition) span residues 319 to 322 (DLSE) and 341 to 343 (ELQ). N359 carries an N-linked (GlcNAc...) asparagine glycan. 2 consecutive short sequence motifs (small peptide recognition) follow at residues 389 to 393 (MFFAW) and 415 to 418 (DLSY). LRR repeat units follow at residues 408 to 432 (CQEL…IFEI), 434 to 456 (NLTK…IGNC), 457 to 480 (TNLY…IGNL), 481 to 504 (KNLN…ISGC), 506 to 526 (SLEF…GTLP), 527 to 550 (KSLQ…IGSL), 551 to 574 (TELT…ISSC), 576 to 598 (SLQL…LGRI), 600 to 622 (SLAI…RFSS), 623 to 646 (LTNL…LADL), and 647 to 670 (QNLV…LFFR). 2 N-linked (GlcNAc...) asparagine glycosylation sites follow: N420 and N434. The short motif at 437-441 (KLLLL) is the Small peptide recognition element. N455 carries N-linked (GlcNAc...) asparagine glycosylation. The Small peptide recognition signature appears at 461–463 (RLR). N-linked (GlcNAc...) asparagine glycosylation occurs at N606. N653 is a glycosylation site (N-linked (GlcNAc...) asparagine). A helical transmembrane segment spans residues 703 to 723 (VTMSILVAASVVLVLMAVYTL). Residues 724 to 1090 (VKAQRITGKQ…CSFAYSDESV (367 aa)) are Cytoplasmic-facing. One can recognise a Protein kinase domain in the interval 758-1040 (LTSANVIGTG…KDIVAMLKEI (283 aa)). ATP-binding positions include 764-772 (IGTGSSGVV) and K786. Phosphotyrosine is present on residues Y829 and Y869. The Proton acceptor role is filled by D882. Y932 carries the post-translational modification Phosphotyrosine. One copy of the LRR 24 repeat lies at 1037–1060 (LKEIRQFDMDRSESDMIKGGKCEK). The segment at 1054–1079 (KGGKCEKWQPQPLPPEKIVSTPRGSS) is disordered.

The protein belongs to the protein kinase superfamily. Ser/Thr protein kinase family. As to quaternary structure, self-interacts. Interacts with RGF1; this interaction triggers its phosphorylation and ubiquitination and the formation of heterodimers with SERK1. In terms of processing, autophosphorylated. Phosphorylated and ubiquitinated upon interaction with RGF1, thus leading to activation a subsequent degradation. Expressed in floers, pollen grains and stipules. Present in roots.

Its subcellular location is the cell membrane. It carries out the reaction L-seryl-[protein] + ATP = O-phospho-L-seryl-[protein] + ADP + H(+). It catalyses the reaction L-threonyl-[protein] + ATP = O-phospho-L-threonyl-[protein] + ADP + H(+). Its function is as follows. Receptor with a serine/threonine-protein kinase activity. Together with SKM1, LRR-rich receptor-like kinase (LRR-RLK) required for male fertility by the perception of CLE43 and CLE45 peptides and the transduction of their promoting action in pollen tubes, especially under relatively high temperature (at 30 degrees Celsius), thus conferring tolerance against high temperature probably through the maintenance of mitochondrial activity. Seems to not be involved in the perception of CLE45 peptide in roots. Together with RGI1, RGI2, RGI3, RGI4 and RGI5, acts as receptor of RGF1, a peptide hormone that maintains the postembryonic root stem cell niche by regulating the expression levels and patterns of the transcription factor PLETHORA (PLT). Links RGF1 signal with its downstream components. This Arabidopsis thaliana (Mouse-ear cress) protein is Leucine-rich repeat receptor-like serine/threonine-protein kinase RGI4.